Consider the following 461-residue polypeptide: Fumarate hydratase class II (461 aa).

Substrate is bound by residues 97–99 (SGT), 127–130 (HPND), 137–139 (SSN), and T185. Catalysis depends on H186, which acts as the Proton donor/acceptor. Residue S316 is part of the active site. Substrate contacts are provided by residues S317 and 322-324 (KVN).

This sequence belongs to the class-II fumarase/aspartase family. Fumarase subfamily. In terms of assembly, homotetramer.

It localises to the cytoplasm. It carries out the reaction (S)-malate = fumarate + H2O. It functions in the pathway carbohydrate metabolism; tricarboxylic acid cycle; (S)-malate from fumarate: step 1/1. In terms of biological role, involved in the TCA cycle. Catalyzes the stereospecific interconversion of fumarate to L-malate. The sequence is that of Fumarate hydratase class II from Staphylococcus aureus (strain Mu50 / ATCC 700699).